The chain runs to 504 residues: UDP-glycosyltransferase UGT4 (504 aa).

An N-terminal signal peptide occupies residues 1–23; that stretch reads MTLLRDLLLLYINSLLFINPSIG. Residues 24 to 474 are Lumenal-facing; the sequence is ENILVFLPTK…SAVIDLYWFQ (451 aa). Residues Asn-54, Asn-66, Asn-69, and Asn-422 are each glycosylated (N-linked (GlcNAc...) asparagine). Residues 475–495 form a helical membrane-spanning segment; the sequence is YILLDIILFYSLIVLILLCIL. Over 496–504 the chain is Cytoplasmic; sequence RIFFRMLTK.

This sequence belongs to the UDP-glycosyltransferase family.

Its subcellular location is the microsome membrane. Its function is as follows. Catalyzes the transfer of a glycosyl group from a UDP-sugar to an acceptor molecule. This is UDP-glycosyltransferase UGT4 from Dactylopius coccus (Cochineal).